Consider the following 302-residue polypeptide: N-acetylaspartate synthetase (302 aa).

Pro residues predominate over residues 46–60; it reads PGPAAAPPAPPPAPV. The disordered stretch occupies residues 46-72; the sequence is PGPAAAPPAPPPAPVAQPHGGAGGAGP. A helical membrane pass occupies residues 121–141; sequence YALLAALCFAVSRSLLLTCLV. An N-acetyltransferase domain is found at 143-283; it reads AALLGLRYYY…VLPGMTLSLA (141 aa).

It belongs to the NAT8 family. In terms of tissue distribution, expressed in brain.

Its subcellular location is the cytoplasm. The protein localises to the microsome membrane. The protein resides in the mitochondrion membrane. It localises to the endoplasmic reticulum membrane. It carries out the reaction L-aspartate + acetyl-CoA = N-acetyl-L-aspartate + CoA + H(+). Aminooxyacetic acid (AOAA) blocks its activity in both cytoplasm and mitochondria. In terms of biological role, catalyzes the synthesis of N-acetylaspartate acid (NAA) from L-aspartate and acetyl-CoA. Promotes dopamine uptake by regulating TNF-alpha expression. Attenuates methamphetamine-induced inhibition of dopamine uptake. The chain is N-acetylaspartate synthetase from Homo sapiens (Human).